A 232-amino-acid polypeptide reads, in one-letter code: Ubiquinone biosynthesis O-methyltransferase (232 aa).

4 residues coordinate S-adenosyl-L-methionine: Arg36, Gly55, Asp76, and Met120.

Belongs to the methyltransferase superfamily. UbiG/COQ3 family.

The enzyme catalyses a 3-demethylubiquinol + S-adenosyl-L-methionine = a ubiquinol + S-adenosyl-L-homocysteine + H(+). It catalyses the reaction a 3-(all-trans-polyprenyl)benzene-1,2-diol + S-adenosyl-L-methionine = a 2-methoxy-6-(all-trans-polyprenyl)phenol + S-adenosyl-L-homocysteine + H(+). It functions in the pathway cofactor biosynthesis; ubiquinone biosynthesis. Its function is as follows. O-methyltransferase that catalyzes the 2 O-methylation steps in the ubiquinone biosynthetic pathway. The sequence is that of Ubiquinone biosynthesis O-methyltransferase from Burkholderia cenocepacia (strain ATCC BAA-245 / DSM 16553 / LMG 16656 / NCTC 13227 / J2315 / CF5610) (Burkholderia cepacia (strain J2315)).